We begin with the raw amino-acid sequence, 351 residues long: MATDVQLADYPLMSPKAELKLEKKSGRKPRSPRDSGPQKELVIPGIVDFERIRRALRTPKPQTPGTYCFGRLSHHSFFSRHHPHPQHVTHIQDLTGKPVCVVRDFPAPLPESTVFSGCQMGIPTISVPIGDPQSNRNPQLSSEAWKKELKELASRVAFLTKEDELKKKEKEQKEEPLREQGAKYSAETGRLIPASTRAVGRRRSHQGQQSQSSSRHEGVQAFLLQDQELLVLELLCRILETDLLSAIQFWLLYAPPKEKDLALGLLQTAVAQLLPQPLVSIPTEKLLSQLPEVHEPPQEKQEPPCSQSPKKTKISPFTKSEKPEYIGEAQVLQMHSSQNTEKKTSKPRAES.

Disordered regions lie at residues 16-40 (KAELKLEKKSGRKPRSPRDSGPQKE), 167-186 (KKEKEQKEEPLREQGAKYSA), 195-216 (STRAVGRRRSHQGQQSQSSSRH), and 292-351 (EVHE…RAES). A compositionally biased stretch (basic and acidic residues) spans 167–181 (KKEKEQKEEPLREQG). 2 stretches are compositionally biased toward basic and acidic residues: residues 292–302 (EVHEPPQEKQE) and 340–351 (TEKKTSKPRAES).

The protein belongs to the TBATA family.

The protein resides in the cytoplasm. It localises to the cytosol. May play a role in spermatid differentiation. Modulates thymic stromal cell proliferation and thymus function. In Homo sapiens (Human), this protein is Protein TBATA (TBATA).